We begin with the raw amino-acid sequence, 238 residues long: Sugar fermentation stimulation protein homolog (238 aa).

The protein belongs to the SfsA family.

In Pseudomonas entomophila (strain L48), this protein is Sugar fermentation stimulation protein homolog.